A 348-amino-acid chain; its full sequence is Noscapine synthase SDR1 (348 aa).

It belongs to the NAD(P)-dependent epimerase/dehydratase family.

It carries out the reaction narcotine hemiacetal + NAD(+) = noscapine + NADH + H(+). Its pathway is alkaloid biosynthesis. In terms of biological role, oxidoreductase that catalyzes the last step in the biosynthesis of the benzylisoquinoline alkaloid noscapine. Converts narcotine hemiacetal to noscapine. This Papaver somniferum (Opium poppy) protein is Noscapine synthase SDR1.